Consider the following 435-residue polypeptide: Probable alpha-galactosidase B (435 aa).

A signal peptide spans 1-18 (MLTSLSLTALALLPSANA). Cys41 and Cys73 are joined by a disulfide. A glycan (N-linked (GlcNAc...) asparagine) is linked at Asn81. Residues Cys123 and Cys153 are joined by a disulfide bond. Asp151 acts as the Nucleophile in catalysis. 2 N-linked (GlcNAc...) asparagine glycosylation sites follow: Asn158 and Asn176. Residue 221–225 (DWGQA) coordinates substrate. A glycan (N-linked (GlcNAc...) asparagine) is linked at Asn232. The active-site Proton donor is Asp243. Asn378 carries an N-linked (GlcNAc...) asparagine glycan.

This sequence belongs to the glycosyl hydrolase 27 family.

It is found in the secreted. It catalyses the reaction Hydrolysis of terminal, non-reducing alpha-D-galactose residues in alpha-D-galactosides, including galactose oligosaccharides, galactomannans and galactolipids.. Its function is as follows. Hydrolyzes a variety of simple alpha-D-galactoside as well as more complex molecules such as oligosaccharides and polysaccharides. The sequence is that of Probable alpha-galactosidase B (agl1) from Penicillium simplicissimum.